The following is a 61-amino-acid chain: MAKKSMVAKWKRGSKYKVRKYNRCHICGRPRAVYREFGLCRVCFRKLASEGKLPGVKKASW.

Cysteine 24, cysteine 27, cysteine 40, and cysteine 43 together coordinate Zn(2+).

Belongs to the universal ribosomal protein uS14 family. Zinc-binding uS14 subfamily. In terms of assembly, part of the 30S ribosomal subunit. Contacts proteins S3 and S10. The cofactor is Zn(2+).

Functionally, binds 16S rRNA, required for the assembly of 30S particles and may also be responsible for determining the conformation of the 16S rRNA at the A site. The sequence is that of Small ribosomal subunit protein uS14 from Kosmotoga olearia (strain ATCC BAA-1733 / DSM 21960 / TBF 19.5.1).